The following is a 2131-amino-acid chain: Beta/gamma crystallin domain-containing protein 1 (2131 aa).

Disordered regions lie at residues Met1–Pro53, Lys104–Ala370, Thr385–Lys674, Arg688–Ser707, and Ala723–Leu743. Basic residues predominate over residues Pro19–Gln35. The span at Arg135–Lys147 shows a compositional bias: polar residues. Composition is skewed to basic and acidic residues over residues Leu160 to Arg169 and Gly184 to Glu194. The span at Ala248 to Gln265 shows a compositional bias: polar residues. The segment covering Ser414–Ser424 has biased composition (basic residues). Low complexity predominate over residues Ala479–Pro490. Ser483 and Ser489 each carry phosphoserine. Composition is skewed to basic and acidic residues over residues Pro536–Pro546 and Glu562–Pro572. Residues Arg609–Ala619 show a composition bias toward low complexity. A compositionally biased stretch (basic and acidic residues) spans Ala723 to Val733. Phosphoserine occurs at positions 737 and 756. Disordered regions lie at residues Glu758–Thr791 and Asp837–Cys889. Residues Gly769–Asn782 show a composition bias toward polar residues. Over residues Ser864 to Pro881 the composition is skewed to low complexity. Position 892 is a phosphoserine (Ser892). Disordered stretches follow at residues Leu926–Ser947, Gln1041–Ser1101, Ser1271–Asn1302, and Ser1316–Asn1348. Thr933 is modified (phosphothreonine). The segment covering Ser1055 to Asn1089 has biased composition (polar residues). 3 stretches are compositionally biased toward low complexity: residues Ser1091–Ser1101, Ser1271–Thr1288, and Ser1316–Pro1327. Positions Ser1328 to Asn1348 are enriched in basic and acidic residues. Beta/gamma crystallin 'Greek key' domains are found at residues Gly1430–Arg1469, Gly1470–Val1525, Ser1531–Trp1571, Gly1572–Lys1614, Pro1626–Arg1678, Gly1679–Leu1721, Ala1727–Ser1769, Gly1770–Cys1812, Asn1823–Gly1860, Gly1861–Asp1904, Pro1910–Gly1950, and Gly1951–Val1992. Positions Lys1994–Met2127 constitute a Ricin B-type lectin domain.

Belongs to the beta/gamma-crystallin family.

In terms of biological role, may function as suppressor of malignant melanoma. It may exert its effects through interactions with the cytoskeleton. The protein is Beta/gamma crystallin domain-containing protein 1 of Homo sapiens (Human).